The chain runs to 351 residues: Selenide, water dikinase (351 aa).

Residue cysteine 20 is part of the active site. ATP is bound by residues lysine 23 and 51-53; that span reads TKD. Aspartate 54 is a binding site for Mg(2+). ATP-binding positions include aspartate 71, aspartate 94, and 142–144; that span reads GHS. Aspartate 94 is a binding site for Mg(2+). Aspartate 230 lines the Mg(2+) pocket.

The protein belongs to the selenophosphate synthase 1 family. Class I subfamily. In terms of assembly, homodimer. Mg(2+) serves as cofactor.

It carries out the reaction hydrogenselenide + ATP + H2O = selenophosphate + AMP + phosphate + 2 H(+). Synthesizes selenophosphate from selenide and ATP. The polypeptide is Selenide, water dikinase (Pasteurella multocida (strain Pm70)).